We begin with the raw amino-acid sequence, 278 residues long: Potassium/proton antiporter CemA (278 aa).

Helical transmembrane passes span 61–81, 155–175, 203–223, and 238–258; these read IFLL…FDFG, AVKN…LMIT, IILF…EVII, and FIFL…KYWI.

This sequence belongs to the CemA family.

The protein resides in the plastid. The protein localises to the chloroplast inner membrane. The catalysed reaction is K(+)(in) + H(+)(out) = K(+)(out) + H(+)(in). Its function is as follows. Contributes to K(+)/H(+) antiport activity by supporting proton efflux to control proton extrusion and homeostasis in chloroplasts in a light-dependent manner to modulate photosynthesis. Prevents excessive induction of non-photochemical quenching (NPQ) under continuous-light conditions. Indirectly promotes efficient inorganic carbon uptake into chloroplasts. In Porphyra purpurea (Red seaweed), this protein is Potassium/proton antiporter CemA.